The primary structure comprises 182 residues: Fucoxanthin-chlorophyll a-c binding protein D, chloroplastic (182 aa).

The N-terminal 4 residues, 1–4 (AMKM), are a transit peptide targeting the chloroplast. Helical transmembrane passes span 46–66 (IAML…PGML), 87–107 (IPPG…LAVM), and 148–168 (GRAA…NNKP).

This sequence belongs to the fucoxanthin chlorophyll protein family. In terms of assembly, the LHC complex of chromophytic algae is composed of fucoxanthin, chlorophyll A and C bound non-covalently by fucoxanthin chlorophyll proteins (FCPs). The ratio of pigments in this LHC is; fucoxanthin: chlorophyll C: chlorophyll A; (0.6-1): (0.1-0.3): (1).

It is found in the plastid. The protein resides in the chloroplast thylakoid membrane. The light-harvesting complex (LHC) functions as a light receptor, it captures and delivers excitation energy to photosystems with which it is closely associated. Energy is transferred from the carotenoid and chlorophyll C (or B) to chlorophyll A and the photosynthetic reaction centers where it is used to synthesize ATP and reducing power. This is Fucoxanthin-chlorophyll a-c binding protein D, chloroplastic (FCPD) from Macrocystis pyrifera (Giant kelp).